A 468-amino-acid chain; its full sequence is 6-phospho-beta-galactosidase 2 (468 aa).

D-galactose 6-phosphate-binding residues include glutamine 19, histidine 116, asparagine 159, glutamate 160, and asparagine 297. Catalysis depends on glutamate 160, which acts as the Proton donor. Catalysis depends on glutamate 375, which acts as the Nucleophile. Serine 428, tryptophan 429, lysine 435, and tyrosine 437 together coordinate D-galactose 6-phosphate.

Belongs to the glycosyl hydrolase 1 family.

The catalysed reaction is a 6-phospho-beta-D-galactoside + H2O = D-galactose 6-phosphate + an alcohol. It functions in the pathway carbohydrate metabolism; lactose degradation; D-galactose 6-phosphate and beta-D-glucose from lactose 6-phosphate: step 1/1. The polypeptide is 6-phospho-beta-galactosidase 2 (Streptococcus pneumoniae (strain ATCC BAA-255 / R6)).